Here is a 311-residue protein sequence, read N- to C-terminus: Homoserine kinase (311 aa).

Residue 88 to 98 (PEGLGLGSSGA) participates in ATP binding.

This sequence belongs to the GHMP kinase family. Homoserine kinase subfamily.

It is found in the cytoplasm. It carries out the reaction L-homoserine + ATP = O-phospho-L-homoserine + ADP + H(+). The protein operates within amino-acid biosynthesis; L-threonine biosynthesis; L-threonine from L-aspartate: step 4/5. Its function is as follows. Catalyzes the ATP-dependent phosphorylation of L-homoserine to L-homoserine phosphate. In Saccharolobus islandicus (strain Y.N.15.51 / Yellowstone #2) (Sulfolobus islandicus), this protein is Homoserine kinase.